The chain runs to 270 residues: UBX domain-containing protein 8 (270 aa).

Residue Met-1 is a topological domain, cytoplasmic. Residues 2-22 traverse the membrane as a helical segment; that stretch reads ASRGVVGIFFLSAVPLVCLEL. The Lumenal segment spans residues 23-33; it reads RRGIPDIGIKD. A helical transmembrane segment spans residues 34 to 54; that stretch reads FLLLCGRILLLLALLTLIISV. Topologically, residues 55–270 are cytoplasmic; that stretch reads TTSWLNSFKS…LILEEKEQTN (216 aa). Residues 130–171 are disordered; sequence SGHKLGGDEGTSQTSFETSNREAAKSQNLPKPLTEFPSPAEQ. Ser-167 bears the Phosphoserine mark. In terms of domain architecture, UBX spans 187–263; it reads TAEEVVTVAL…GITVDTVLIL (77 aa).

In terms of assembly, interacts with SYVN1 and VCP. In terms of tissue distribution, expressed abundantly in ovary and testis, and weakly in all other tissues tested.

Its subcellular location is the endoplasmic reticulum membrane. In terms of biological role, involved in endoplasmic reticulum-associated degradation (ERAD) for misfolded lumenal proteins, possibly by tethering VCP to the endoplasmic reticulum membrane. May play a role in reproduction. In Homo sapiens (Human), this protein is UBX domain-containing protein 8 (UBXN8).